We begin with the raw amino-acid sequence, 151 residues long: Endoribonuclease YbeY (151 aa).

Residues histidine 113, histidine 117, and histidine 123 each contribute to the Zn(2+) site.

The protein belongs to the endoribonuclease YbeY family. Requires Zn(2+) as cofactor.

It localises to the cytoplasm. Single strand-specific metallo-endoribonuclease involved in late-stage 70S ribosome quality control and in maturation of the 3' terminus of the 16S rRNA. The sequence is that of Endoribonuclease YbeY from Polaromonas naphthalenivorans (strain CJ2).